The chain runs to 1097 residues: Protein toll (1097 aa).

The signal sequence occupies residues 1–27; the sequence is MSRLKAASELALLVIILQLLQWPGSEA. The Extracellular segment spans residues 28 to 807; it reads SFGRDACSEM…ICPAEKGVFI (780 aa). 3 disulfide bridges follow: C34–C45, C43–C56, and C79–C107. N-linked (GlcNAc...) asparagine glycans are attached at residues N80, N140, and N175. 15 LRR repeats span residues 175–195, 198–219, 222–243, 246–267, 270–291, 294–314, 320–340, 343–364, 367–388, 391–412, 415–436, 439–460, 474–495, 498–521, and 523–544; these read NLSH…LFDD, NLES…IFGK, KLKQ…DFEG, SVLG…VFAH, NVTD…LFDH, HLNE…PSRL, ELQI…LFEH, QITN…LLEH, NLLS…LFAH, NLTD…IFSN, NLVT…AFVS, GLRH…LDIM, GLLT…WKNT, QLRE…AFLS, and NRLH…EDVH. N235 carries N-linked (GlcNAc...) asparagine glycosylation. N-linked (GlcNAc...) asparagine glycosylation is found at N270 and N275. N346 is a glycosylation site (N-linked (GlcNAc...) asparagine). N391 is a glycosylation site (N-linked (GlcNAc...) asparagine). N482, N508, and N528 each carry an N-linked (GlcNAc...) asparagine glycan. The 60-residue stretch at 561–620 folds into the LRRCT 1 domain; that stretch reads NPLVCDCTILWFIQLVRGVHKPQYSRQFKLRTDRLVCSQPNVLEGTPVRQIEPQTLICPL. Disulfide bonds link C565–C597, C567–C618, C631–C637, and C635–C650. The 42-residue stretch at 622–663 folds into the LRRNT domain; the sequence is FSDDPRERKCPRGCNCHVRTYDKALVINCHSGNLTHVPRLPN. Residues N654, N677, N703, N715, N730, and N738 are each glycosylated (N-linked (GlcNAc...) asparagine). LRR repeat units follow at residues 669–690, 693–713, and 715–738; these read QLME…NTPG, SVTS…DQLP, and NLTH…GFLN. Positions 751-801 constitute an LRRCT 2 domain; the sequence is NPWMCDCTAKPLLLFTQDNFERIGDRNEMMCVNAEMPTRMVELSTNDICPA. 2 disulfide bridges follow: C755–C781 and C757–C799. Residues 808–828 form a helical membrane-spanning segment; the sequence is ALAVVIALTGLLAGFTAALYY. The Cytoplasmic segment spans residues 829 to 1097; it reads KFQTEIKIWL…INTNAKQSDV (269 aa). A TIR domain is found at 857–993; it reads KKFDAFISYS…WFWDKLRFAL (137 aa).

Belongs to the Toll-like receptor family. As to quaternary structure, in the absence of ligand, forms a low-affinity disulfide-linked homodimer. In the presence of ligand, crystal structures show one Tl molecule bound to a spaetzle C-106 homodimer. However, the active complex probably consists of two Tl molecules bound to a spaetzle C-106 homodimer. This is supported by in vitro experiments which also show binding of the spaetzle C-106 dimer to 2 Tl receptors. Ligand binding induces conformational changes in the extracellular domain of Tl. This may enable a secondary homodimerization interface at the C-terminus of the Tl extracellular domain. As to expression, in early embryos, concentrated in the pseudocleavage furrows that form transiently between nuclei before cellularization and in the cleavage furrows during cellularization (at protein level). Later, found on cells in the mesectoderm, stomodeum, proctodeum, anterior and posterior midguts, splanchnopleura, salivary gland placode and adjacent to the segmentally repeated tracheal placodes (at protein level). During and after germ band shortening, localized in a number of cell types, including the salivary gland, foregut, hindgut, Malpighian tubules and epidermis (at protein level). In embryos, high expression in M13 with comparatively low expression in M12.

It is found in the cell membrane. Its subcellular location is the cytoplasm. In terms of biological role, receptor for the cleaved activated form of spz, spaetzle C-106. Binding to spaetzle C-106 activates the Toll signaling pathway and induces expression of the antifungal peptide drosomycin. Component of the extracellular signaling pathway that establishes dorsal-ventral polarity in the embryo. Promotes heterophilic cellular adhesion. Involved in synaptic targeting of motoneurons RP5 and V to muscle 12 (M12); functions as a repulsive cue inhibiting motoneuron synapse formation on muscle 13 (M13) to guide RP5 and V to the neighboring M12, where its expression is repressed by tey. May also function in embryonic neuronal survival and the synaptic targeting of SNa motoneurons. In Drosophila melanogaster (Fruit fly), this protein is Protein toll.